The primary structure comprises 260 residues: Pyridoxine 5'-phosphate synthase (260 aa).

Asn6 serves as a coordination point for 3-amino-2-oxopropyl phosphate. 8-9 (DH) is a binding site for 1-deoxy-D-xylulose 5-phosphate. Arg17 provides a ligand contact to 3-amino-2-oxopropyl phosphate. Catalysis depends on His42, which acts as the Proton acceptor. 2 residues coordinate 1-deoxy-D-xylulose 5-phosphate: Arg44 and His49. Glu69 (proton acceptor) is an active-site residue. Thr99 contacts 1-deoxy-D-xylulose 5-phosphate. His213 (proton donor) is an active-site residue. 3-amino-2-oxopropyl phosphate is bound by residues Gly214 and 235-236 (GQ).

Belongs to the PNP synthase family. As to quaternary structure, homooctamer; tetramer of dimers.

It is found in the cytoplasm. The enzyme catalyses 3-amino-2-oxopropyl phosphate + 1-deoxy-D-xylulose 5-phosphate = pyridoxine 5'-phosphate + phosphate + 2 H2O + H(+). The protein operates within cofactor biosynthesis; pyridoxine 5'-phosphate biosynthesis; pyridoxine 5'-phosphate from D-erythrose 4-phosphate: step 5/5. Its function is as follows. Catalyzes the complicated ring closure reaction between the two acyclic compounds 1-deoxy-D-xylulose-5-phosphate (DXP) and 3-amino-2-oxopropyl phosphate (1-amino-acetone-3-phosphate or AAP) to form pyridoxine 5'-phosphate (PNP) and inorganic phosphate. The polypeptide is Pyridoxine 5'-phosphate synthase (Sulfurimonas denitrificans (strain ATCC 33889 / DSM 1251) (Thiomicrospira denitrificans (strain ATCC 33889 / DSM 1251))).